The chain runs to 483 residues: Aspartyl/glutamyl-tRNA(Asn/Gln) amidotransferase subunit B (483 aa).

It belongs to the GatB/GatE family. GatB subfamily. As to quaternary structure, heterotrimer of A, B and C subunits.

The catalysed reaction is L-glutamyl-tRNA(Gln) + L-glutamine + ATP + H2O = L-glutaminyl-tRNA(Gln) + L-glutamate + ADP + phosphate + H(+). The enzyme catalyses L-aspartyl-tRNA(Asn) + L-glutamine + ATP + H2O = L-asparaginyl-tRNA(Asn) + L-glutamate + ADP + phosphate + 2 H(+). Functionally, allows the formation of correctly charged Asn-tRNA(Asn) or Gln-tRNA(Gln) through the transamidation of misacylated Asp-tRNA(Asn) or Glu-tRNA(Gln) in organisms which lack either or both of asparaginyl-tRNA or glutaminyl-tRNA synthetases. The reaction takes place in the presence of glutamine and ATP through an activated phospho-Asp-tRNA(Asn) or phospho-Glu-tRNA(Gln). This is Aspartyl/glutamyl-tRNA(Asn/Gln) amidotransferase subunit B from Rickettsia canadensis (strain McKiel).